Reading from the N-terminus, the 188-residue chain is Adenine phosphoribosyltransferase (188 aa).

This sequence belongs to the purine/pyrimidine phosphoribosyltransferase family. As to quaternary structure, homodimer.

The protein localises to the cytoplasm. It carries out the reaction AMP + diphosphate = 5-phospho-alpha-D-ribose 1-diphosphate + adenine. The protein operates within purine metabolism; AMP biosynthesis via salvage pathway; AMP from adenine: step 1/1. Its function is as follows. Catalyzes a salvage reaction resulting in the formation of AMP, that is energically less costly than de novo synthesis. This chain is Adenine phosphoribosyltransferase, found in Burkholderia cenocepacia (strain HI2424).